A 146-amino-acid polypeptide reads, in one-letter code: Phospholipase A2, membrane associated (146 aa).

The signal sequence occupies residues 1-21 (MKVLLLLAVVIMAFGSIQVQG). 7 cysteine pairs are disulfide-bonded: C47–C139, C49–C65, C64–C119, C70–C146, C71–C112, C80–C105, and C98–C110. Ca(2+) contacts are provided by H48, G50, and G52. The active site involves H68. D69 provides a ligand contact to Ca(2+). D113 is an active-site residue.

This sequence belongs to the phospholipase A2 family. It depends on Ca(2+) as a cofactor.

It is found in the secreted. The protein resides in the cell membrane. The protein localises to the mitochondrion outer membrane. The enzyme catalyses a 1,2-diacyl-sn-glycero-3-phosphoethanolamine + H2O = a 1-acyl-sn-glycero-3-phosphoethanolamine + a fatty acid + H(+). It catalyses the reaction 1-hexadecanoyl-2-(9Z-octadecenoyl)-sn-glycero-3-phosphoethanolamine + H2O = 1-hexadecanoyl-sn-glycero-3-phosphoethanolamine + (9Z)-octadecenoate + H(+). It carries out the reaction 1-hexadecanoyl-2-(9Z,12Z-octadecadienoyl)-sn-glycero-3-phosphoethanolamine + H2O = 1-hexadecanoyl-sn-glycero-3-phosphoethanolamine + (9Z,12Z)-octadecadienoate + H(+). The catalysed reaction is 1-hexadecanoyl-2-(5Z,8Z,11Z,14Z-eicosatetraenoyl)-sn-glycero-3-phosphoethanolamine + H2O = 1-hexadecanoyl-sn-glycero-3-phosphoethanolamine + (5Z,8Z,11Z,14Z)-eicosatetraenoate + H(+). The enzyme catalyses N-hexadecanoyl-1,2-di-(9Z-octadecenoyl)-sn-glycero-3-phosphoethanolamine + H2O = N-hexadecanoyl-1-(9Z-octadecenoyl)-sn-glycero-3-phosphoethanolamine + (9Z)-octadecenoate + H(+). It catalyses the reaction 1,2-dihexadecanoyl-sn-glycero-3-phospho-(1'-sn-glycerol) + H2O = 1-hexadecanoyl-sn-glycero-3-phospho-(1'-sn-glycerol) + hexadecanoate + H(+). It carries out the reaction 1-hexadecanoyl-2-(9Z-octadecenoyl)-sn-glycero-3-phosphoglycerol + H2O = 1-hexadecanoyl-sn-glycero-3-phosphoglycerol + (9Z)-octadecenoate + H(+). The catalysed reaction is 1-hexadecanoyl-2-(9Z-octadecenoyl)-sn-glycero-3-phospho-(1'-sn-glycerol) + H2O = 1-hexadecanoyl-sn-glycero-3-phospho-(1'-sn-glycerol) + (9Z)-octadecenoate + H(+). The enzyme catalyses a 1,2-diacyl-sn-glycero-3-phosphocholine + H2O = a 1-acyl-sn-glycero-3-phosphocholine + a fatty acid + H(+). It catalyses the reaction 1,2-dihexadecanoyl-sn-glycero-3-phosphocholine + H2O = 1-hexadecanoyl-sn-glycero-3-phosphocholine + hexadecanoate + H(+). It carries out the reaction 1-hexadecanoyl-2-(9Z-octadecenoyl)-sn-glycero-3-phosphocholine + H2O = 1-hexadecanoyl-sn-glycero-3-phosphocholine + (9Z)-octadecenoate + H(+). The catalysed reaction is 1-hexadecanoyl-2-(9Z,12Z-octadecadienoyl)-sn-glycero-3-phosphocholine + H2O = (9Z,12Z)-octadecadienoate + 1-hexadecanoyl-sn-glycero-3-phosphocholine + H(+). The enzyme catalyses 1-hexadecanoyl-2-(4Z,7Z,10Z,13Z,16Z,19Z-docosahexaenoyl)-sn-glycero-3-phosphocholine + H2O = (4Z,7Z,10Z,13Z,16Z,19Z)-docosahexaenoate + 1-hexadecanoyl-sn-glycero-3-phosphocholine + H(+). Secretory calcium-dependent phospholipase A2 that primarily targets extracellular phospholipids with implications in host antimicrobial defense, inflammatory response and tissue regeneration. Hydrolyzes the ester bond of the fatty acyl group attached at sn-2 position of phospholipids (phospholipase A2 activity) with preference for phosphatidylethanolamines and phosphatidylglycerols over phosphatidylcholines. Contributes to lipid remodeling of cellular membranes and generation of lipid mediators involved in pathogen clearance. Displays bactericidal activity against Gram-positive bacteria by directly hydrolyzing phospholipids of the bacterial membrane. Upon sterile inflammation, targets membrane phospholipids of extracellular mitochondria released from activated platelets, generating free unsaturated fatty acids such as arachidonate that is used by neighboring leukocytes to synthesize inflammatory eicosanoids such as leukotrienes. Simultaneously, by compromising mitochondrial membrane integrity, promotes the release in circulation of potent damage-associated molecular pattern molecules that activate the innate immune response. Plays a stem cell regulator role in the intestinal crypt. Within intracellular compartment mediates Paneth cell differentiation and its stem cell supporting functions by inhibiting Wnt signaling pathway in intestinal stem cell (ICS). Secreted in the intestinal lumen upon inflammation, acts in an autocrine way and promotes prostaglandin E2 synthesis that stimulates Wnt signaling pathway in ICS cells and tissue regeneration. May play a role in the biosynthesis of N-acyl ethanolamines that regulate energy metabolism and inflammation. Hydrolyzes N-acyl phosphatidylethanolamines to N-acyl lysophosphatidylethanolamines, which are further cleaved by a lysophospholipase D to release N-acyl ethanolamines. Independent of its catalytic activity, acts as a ligand for integrins. Binds to and activates integrins ITGAV:ITGB3, ITGA4:ITGB1 and ITGA5:ITGB1. Binds to a site (site 2) which is distinct from the classical ligand-binding site (site 1) and induces integrin conformational changes and enhanced ligand binding to site 1. Induces cell proliferation in an integrin-dependent manner. This Rattus norvegicus (Rat) protein is Phospholipase A2, membrane associated (Pla2g2a).